The sequence spans 377 residues: Carboxynorspermidine/carboxyspermidine decarboxylase (377 aa).

Lys41 carries the N6-(pyridoxal phosphate)lysine modification. The substrate site is built by Glu238 and Asp274.

The protein belongs to the Orn/Lys/Arg decarboxylase class-II family. NspC subfamily. In terms of assembly, homodimer. Pyridoxal 5'-phosphate is required as a cofactor.

It localises to the cytoplasm. It catalyses the reaction carboxynorspermidine + H(+) = norspermidine + CO2. The enzyme catalyses carboxyspermidine + H(+) = spermidine + CO2. Functionally, catalyzes the decarboxylation of carboxynorspermidine and carboxyspermidine. Carboxynorspermidine is decarboxylated 20-fold more efficiently than carboxyspermidine. Exhibits some activity with L-ornithine, but shows no activity with L-arginine, L-lysine or meso-diaminopimelate. The polypeptide is Carboxynorspermidine/carboxyspermidine decarboxylase (Vibrio vulnificus (strain CMCP6)).